The chain runs to 245 residues: Ribosomal RNA large subunit methyltransferase E (245 aa).

Residues G83, W85, D111, D127, and D156 each contribute to the S-adenosyl-L-methionine site. The Proton acceptor role is filled by K196.

It belongs to the class I-like SAM-binding methyltransferase superfamily. RNA methyltransferase RlmE family.

Its subcellular location is the cytoplasm. The enzyme catalyses uridine(2552) in 23S rRNA + S-adenosyl-L-methionine = 2'-O-methyluridine(2552) in 23S rRNA + S-adenosyl-L-homocysteine + H(+). Its function is as follows. Specifically methylates the uridine in position 2552 of 23S rRNA at the 2'-O position of the ribose in the fully assembled 50S ribosomal subunit. In Polaromonas naphthalenivorans (strain CJ2), this protein is Ribosomal RNA large subunit methyltransferase E.